A 437-amino-acid polypeptide reads, in one-letter code: (S)-6-hydroxynicotine oxidase (437 aa).

FAD-binding positions include S16, 35–37, R43, 57–60, V231, S405, and 413–415; these read EAR, GGAG, and EYI.

The protein belongs to the flavin monoamine oxidase family. Homodimer. Requires FAD as cofactor.

It catalyses the reaction (S)-6-hydroxynicotine + O2 + H2O = 6-hydroxypseudooxynicotine + H2O2. It carries out the reaction (S)-6-hydroxynicotine + O2 = 6-hydroxy-N-methylmyosmine + H2O2. The protein operates within alkaloid degradation; nicotine degradation; 6-hydroxypseudooxynicotine from nicotine (S-isomer route): step 2/2. Its activity is regulated as follows. Partially inhibited by Co(2+) or Zn(2+) and significantly inhibited by Ag(+), Cu(2+) and Hg(2+). Its function is as follows. Involved in the degradation of L-nicotine. Catalyzes the oxidation of (S)-6-hydroxynicotine (6-hydroxy-L-nicotine) to 6-hydroxypseudooxynicotine. Oxidation of the pyrrolidine ring of (S)-6-hydroxynicotine leads to the formation of the optically inactive 6-hydroxy-N-methylmyosmine, which hydrolyzes spontaneously to 6-hydroxypseudooxynicotine. Acts with absolute stereospecificity on the L-form of 6-hydroxynicotine. Also involved in the degradation of nornicotine, and catalyzes the oxidation of 6-hydroxynornicotine to 6-hydroxymyosmine, which hydrolyzes to 6-hydroxypseudooxynornicotine. In vitro, converts (S)-nicotine into N-methylmyosmine, which spontaneously hydrolyzes spontaneously into pseudooxynicotine, but catalytic efficiency is about 1900-fold higher with (S)-6-hydroxynicotine. The protein is (S)-6-hydroxynicotine oxidase of Shinella sp. (strain HZN7).